A 272-amino-acid chain; its full sequence is Tryptophan synthase alpha chain (272 aa).

Active-site proton acceptor residues include Glu-49 and Asp-60.

Belongs to the TrpA family. As to quaternary structure, tetramer of two alpha and two beta chains.

It carries out the reaction (1S,2R)-1-C-(indol-3-yl)glycerol 3-phosphate + L-serine = D-glyceraldehyde 3-phosphate + L-tryptophan + H2O. It participates in amino-acid biosynthesis; L-tryptophan biosynthesis; L-tryptophan from chorismate: step 5/5. Its function is as follows. The alpha subunit is responsible for the aldol cleavage of indoleglycerol phosphate to indole and glyceraldehyde 3-phosphate. The chain is Tryptophan synthase alpha chain from Polaromonas sp. (strain JS666 / ATCC BAA-500).